A 288-amino-acid polypeptide reads, in one-letter code: Bifunctional protein FolD (288 aa).

NADP(+) contacts are provided by residues 166 to 168 (GAS) and I232.

The protein belongs to the tetrahydrofolate dehydrogenase/cyclohydrolase family. Homodimer.

The enzyme catalyses (6R)-5,10-methylene-5,6,7,8-tetrahydrofolate + NADP(+) = (6R)-5,10-methenyltetrahydrofolate + NADPH. The catalysed reaction is (6R)-5,10-methenyltetrahydrofolate + H2O = (6R)-10-formyltetrahydrofolate + H(+). The protein operates within one-carbon metabolism; tetrahydrofolate interconversion. Functionally, catalyzes the oxidation of 5,10-methylenetetrahydrofolate to 5,10-methenyltetrahydrofolate and then the hydrolysis of 5,10-methenyltetrahydrofolate to 10-formyltetrahydrofolate. This Escherichia coli (strain UTI89 / UPEC) protein is Bifunctional protein FolD.